Reading from the N-terminus, the 249-residue chain is uncharacterized protein (249 aa).

The N-terminal stretch at 1–25 (MRYLNTKNIIAAGVLLSCMSSIAWG) is a signal peptide.

The protein belongs to the periplasmic pilus chaperone family.

The protein resides in the periplasm. In terms of biological role, could be required for the biogenesis of a putative fimbria. This is an uncharacterized protein from Escherichia coli (strain K12).